The sequence spans 479 residues: Glycerol kinase 5 (479 aa).

ATP contacts are provided by S20 and S21. Glycerol contacts are provided by R90, D267, and Q268. The ATP site is built by T289, G332, and G432.

Belongs to the FGGY kinase family.

It localises to the cytoplasm. It carries out the reaction glycerol + ATP = sn-glycerol 3-phosphate + ADP + H(+). Its pathway is polyol metabolism; glycerol degradation via glycerol kinase pathway; sn-glycerol 3-phosphate from glycerol: step 1/1. Its function is as follows. Skin-specific kinase that plays a key role in glycerol metabolism, catalyzing its phosphorylation to produce sn-glycerol 3-phosphate. Involved in skin-specific regulation of sterol regulatory element-binding protein (SREBP) processing and lipid biosynthesis. This is Glycerol kinase 5 (gk5) from Xenopus laevis (African clawed frog).